We begin with the raw amino-acid sequence, 295 residues long: Alpha-ketoglutarate-dependent dioxygenase alkB homolog 3 (295 aa).

The disordered stretch occupies residues 1–48; it reads MGDKRQRARVQGAWATPTKSQSAARPATPARSRPSQTPGPSWRSKEQQ. The segment covering 22 to 35 has biased composition (low complexity); sequence SAARPATPARSRPS. Substrate is bound by residues tryptophan 115 and 141–143; that span reads YTY. The Fe2OG dioxygenase domain occupies 172–278; the sequence is TFNSLLCNFY…RVNLTFRTVY (107 aa). Leucine 177 carries the (4R)-5-hydroxyleucine; alternate modification. A (4R)-5-oxoleucine; alternate modification is found at leucine 177. 179–181 contributes to the 2-oxoglutarate binding site; the sequence is NFY. Residues histidine 191 and aspartate 193 each contribute to the Fe cation site. Aspartate 194 is a binding site for substrate. A Fe cation-binding site is contributed by histidine 257. Residues 269–275 and arginine 275 each bind 2-oxoglutarate; that span reads RVNLTFR.

Belongs to the alkB family. As to quaternary structure, interacts with the ASCC complex composed of ASCC1, ASCC2 and ASCC3. Interacts directly with ASCC3, and is thereby recruited to the ASCC complex. Interacts with OTUD4; the interaction is direct. Interacts with USP7 and USP9X. The cofactor is Fe(2+). In terms of processing, ubiquitinated; undergoes 'Lys-48'-linked polyubiquitination. OTUD4 promotes USP7 and USP9X-dependent deubiquitination of 'Lys-48'-polyubiquitinated ALKBH3 promoting the repair of alkylated DNA lesions.

The protein localises to the nucleus. It is found in the cytoplasm. The enzyme catalyses an N(1)-methyladenosine in mRNA + 2-oxoglutarate + O2 = an adenosine in mRNA + formaldehyde + succinate + CO2. It carries out the reaction a methylated nucleobase within DNA + 2-oxoglutarate + O2 = a nucleobase within DNA + formaldehyde + succinate + CO2. It catalyses the reaction an N(1)-methyl-2'-deoxyadenosine in single-stranded DNA + 2-oxoglutarate + O2 = a 2'-deoxyadenosine in single-stranded DNA + formaldehyde + succinate + CO2 + H(+). The catalysed reaction is an N(3)-methyl-2'-deoxycytidine in single-stranded DNA + 2-oxoglutarate + O2 = a 2'-deoxycytidine in single-stranded DNA + formaldehyde + succinate + CO2 + H(+). The enzyme catalyses a 3,N(4)-etheno-2'-deoxycytidine in single-stranded DNA + 2-oxoglutarate + O2 + H2O = a 2'-deoxycytidine in single-stranded DNA + glyoxal + succinate + CO2. Activated by ascorbate. In terms of biological role, dioxygenase that mediates demethylation of DNA and RNA containing 1-methyladenosine (m1A). Repairs alkylated DNA containing 1-methyladenosine (m1A) and 3-methylcytosine (m3C) by oxidative demethylation. Has a strong preference for single-stranded DNA. Able to process alkylated m3C within double-stranded regions via its interaction with ASCC3, which promotes DNA unwinding to generate single-stranded substrate needed for ALKBH3. Can repair exocyclic 3,N4-ethenocytosine adducs in single-stranded DNA. Also acts on RNA. Demethylates N(1)-methyladenosine (m1A) RNA, an epigenetic internal modification of messenger RNAs (mRNAs) highly enriched within 5'-untranslated regions (UTRs) and in the vicinity of start codons. Requires molecular oxygen, alpha-ketoglutarate and iron. This Rattus norvegicus (Rat) protein is Alpha-ketoglutarate-dependent dioxygenase alkB homolog 3.